Reading from the N-terminus, the 371-residue chain is MTFSPEPAYQHGHAPRTAILLVNLGTPDAPTPKAVGRYLKEFLSDPRVVEIPRAAWLPLLHGVILPLRSRASALKYESIWLREAHMTGSPLLVYSERQAHALQRLMNQHGHEVTVACAMRYGNPSIASVLEALRRQGCEQVLVLPMYPQYSGTTTATAFDEVFRVLGQWRNQPELRLVKHFHDHPAYISALHQQVGAYWARHGMPDFARGDKLILSFHGVPRRTLELGDPYHCECLKTGRLLGEALGLQPGQYQVTFQSRFGKAEWLQPYTAPTLAELGKVGAGRVDVFCPGFPADCIETLEEIAMEGQTEFKVAGGKDFHFIPCLNDADPWVAAMAEIALQHLQGWPLATPHPHELEARRTRAQTRGAAA.

Fe cation is bound by residues His218 and Glu299.

This sequence belongs to the ferrochelatase family.

Its subcellular location is the cytoplasm. It catalyses the reaction heme b + 2 H(+) = protoporphyrin IX + Fe(2+). It participates in porphyrin-containing compound metabolism; protoheme biosynthesis; protoheme from protoporphyrin-IX: step 1/1. Catalyzes the ferrous insertion into protoporphyrin IX. The polypeptide is Ferrochelatase (Cupriavidus necator (strain ATCC 17699 / DSM 428 / KCTC 22496 / NCIMB 10442 / H16 / Stanier 337) (Ralstonia eutropha)).